Reading from the N-terminus, the 266-residue chain is Glucosamine-6-phosphate deaminase (266 aa).

Catalysis depends on Asp-72, which acts as the Proton acceptor; for enolization step. Asp-141 (for ring-opening step) is an active-site residue. Residue His-143 is the Proton acceptor; for ring-opening step of the active site. Catalysis depends on Glu-148, which acts as the For ring-opening step.

The protein belongs to the glucosamine/galactosamine-6-phosphate isomerase family. NagB subfamily. Homohexamer.

The enzyme catalyses alpha-D-glucosamine 6-phosphate + H2O = beta-D-fructose 6-phosphate + NH4(+). It participates in amino-sugar metabolism; N-acetylneuraminate degradation; D-fructose 6-phosphate from N-acetylneuraminate: step 5/5. Allosterically activated by N-acetylglucosamine 6-phosphate (GlcNAc6P). Its function is as follows. Catalyzes the reversible isomerization-deamination of glucosamine 6-phosphate (GlcN6P) to form fructose 6-phosphate (Fru6P) and ammonium ion. The sequence is that of Glucosamine-6-phosphate deaminase from Aliivibrio fischeri (strain ATCC 700601 / ES114) (Vibrio fischeri).